The primary structure comprises 208 residues: Small ribosomal subunit protein uS4 (208 aa).

Residues glutamine 98–isoleucine 161 enclose the S4 RNA-binding domain.

The protein belongs to the universal ribosomal protein uS4 family. Part of the 30S ribosomal subunit. Contacts protein S5. The interaction surface between S4 and S5 is involved in control of translational fidelity.

Functionally, one of the primary rRNA binding proteins, it binds directly to 16S rRNA where it nucleates assembly of the body of the 30S subunit. With S5 and S12 plays an important role in translational accuracy. In Campylobacter fetus subsp. fetus (strain 82-40), this protein is Small ribosomal subunit protein uS4.